Reading from the N-terminus, the 94-residue chain is Phosphoribosyl-ATP pyrophosphatase (94 aa).

The protein belongs to the PRA-PH family.

Its subcellular location is the cytoplasm. It carries out the reaction 1-(5-phospho-beta-D-ribosyl)-ATP + H2O = 1-(5-phospho-beta-D-ribosyl)-5'-AMP + diphosphate + H(+). The protein operates within amino-acid biosynthesis; L-histidine biosynthesis; L-histidine from 5-phospho-alpha-D-ribose 1-diphosphate: step 2/9. The polypeptide is Phosphoribosyl-ATP pyrophosphatase (Pyrobaculum neutrophilum (strain DSM 2338 / JCM 9278 / NBRC 100436 / V24Sta) (Thermoproteus neutrophilus)).